The primary structure comprises 295 residues: Tyrosine recombinase XerC (295 aa).

One can recognise a Core-binding (CB) domain in the interval 1–85; sequence MLTALNRYWD…ALRRFLSFLV (85 aa). Residues 106-285 form the Tyr recombinase domain; it reads HLPKNMDGEQ…NFQHLAEVYD (180 aa). Residues Arg-145, Lys-169, His-237, Arg-240, and His-263 contribute to the active site. Tyr-272 (O-(3'-phospho-DNA)-tyrosine intermediate) is an active-site residue.

This sequence belongs to the 'phage' integrase family. XerC subfamily. In terms of assembly, forms a cyclic heterotetrameric complex composed of two molecules of XerC and two molecules of XerD.

The protein localises to the cytoplasm. Its function is as follows. Site-specific tyrosine recombinase, which acts by catalyzing the cutting and rejoining of the recombining DNA molecules. The XerC-XerD complex is essential to convert dimers of the bacterial chromosome into monomers to permit their segregation at cell division. It also contributes to the segregational stability of plasmids. The sequence is that of Tyrosine recombinase XerC from Haemophilus influenzae (strain PittEE).